Here is a 369-residue protein sequence, read N- to C-terminus: Erythronate-4-phosphate dehydrogenase (369 aa).

Positions 45 and 66 each coordinate substrate. Asp-146 is an NAD(+) binding site. Arg-209 is an active-site residue. Asp-233 lines the NAD(+) pocket. Residue Glu-238 is part of the active site. His-255 (proton donor) is an active-site residue. Gly-258 contributes to the NAD(+) binding site.

The protein belongs to the D-isomer specific 2-hydroxyacid dehydrogenase family. PdxB subfamily. As to quaternary structure, homodimer.

It localises to the cytoplasm. It catalyses the reaction 4-phospho-D-erythronate + NAD(+) = (R)-3-hydroxy-2-oxo-4-phosphooxybutanoate + NADH + H(+). It functions in the pathway cofactor biosynthesis; pyridoxine 5'-phosphate biosynthesis; pyridoxine 5'-phosphate from D-erythrose 4-phosphate: step 2/5. In terms of biological role, catalyzes the oxidation of erythronate-4-phosphate to 3-hydroxy-2-oxo-4-phosphonooxybutanoate. The protein is Erythronate-4-phosphate dehydrogenase of Porphyromonas gingivalis (strain ATCC BAA-308 / W83).